We begin with the raw amino-acid sequence, 155 residues long: Small ribosomal subunit protein uS7c (155 aa).

This sequence belongs to the universal ribosomal protein uS7 family. As to quaternary structure, part of the 30S ribosomal subunit.

The protein resides in the plastid. The protein localises to the chloroplast. One of the primary rRNA binding proteins, it binds directly to 16S rRNA where it nucleates assembly of the head domain of the 30S subunit. The protein is Small ribosomal subunit protein uS7c (rps7) of Allium textile (Textile onion).